The chain runs to 620 residues: MALLQIAEPGMSTAPHQHRLAVGIDLGTTNSLVATVRNSIPEILTDEEGRSLLPSVVHYLKNGSAHIGYKAQAAQNTDPKNTIVSVKRFMGRGLKDIAYAENLPYDFLDTPGMVQLKTVAGVKSPVEVSAEILATLRQQAEDALGDDLVGAVITVPAYFDDAQRQATKDAAKLAGLNVLRLLNEPTAAAIAYGLDNGSEGVFAVYDLGGGTFDVSILKLTKGVFEVLSTGGDSALGGDDFDHRLFCWIIEQAGLAPLSEIDTSVLMVKAREAKELLSSKSETLIDAVLTSGEEVHVTVTAADFIQMTQHLVTKTITPTKKALRDAGLSVDDVDGVVMVGGATRMPHIRKAVGDFFQSTPLANIDPDKVVALGAAVQANLLAGNRAAGDDWLLLDVIPLSLGIETMGGLVEKVIPRNSTIPCARAQEFTTFKDGQTALAVHIVQGERELVTDCRSLAKFELRGIPPMAAGAARIRVTYQVDADGLLSVSARELRSGVEASISVKPSYGLADDQIAQMLQDSFKSADVDMAARALREEQVEAERIVLATQSALDADASLLSDNEREDIVALLDSVRQAGSGTDHLAIKAAVDALAHGTEEFAARRMDRSVRSALSGKKLDEI.

The protein belongs to the heat shock protein 70 family.

In terms of biological role, chaperone involved in the maturation of iron-sulfur cluster-containing proteins. Has a low intrinsic ATPase activity which is markedly stimulated by HscB. In Herminiimonas arsenicoxydans, this protein is Chaperone protein HscA homolog.